The chain runs to 109 residues: Cysteine-rich venom protein 7 (109 aa).

The N-terminal stretch at 1-21 is a signal peptide; sequence MSKVFVIILVALMVAISIASA. 5 cysteine pairs are disulfide-bonded: cysteine 30–cysteine 47, cysteine 37–cysteine 52, cysteine 46–cysteine 58, cysteine 70–cysteine 90, and cysteine 78–cysteine 98.

Expressed by the venom gland.

It localises to the secreted. The sequence is that of Cysteine-rich venom protein 7 from Pimpla hypochondriaca (Parasitoid wasp).